The sequence spans 404 residues: Imidazolonepropionase (404 aa).

Histidine 70 and histidine 72 together coordinate Fe(3+). 2 residues coordinate Zn(2+): histidine 70 and histidine 72. The 4-imidazolone-5-propanoate site is built by arginine 79, tyrosine 142, and histidine 174. Tyrosine 142 lines the N-formimidoyl-L-glutamate pocket. Histidine 234 contributes to the Fe(3+) binding site. Histidine 234 is a Zn(2+) binding site. Position 237 (glutamate 237) interacts with 4-imidazolone-5-propanoate. A Fe(3+)-binding site is contributed by aspartate 308. Residue aspartate 308 participates in Zn(2+) binding.

This sequence belongs to the metallo-dependent hydrolases superfamily. HutI family. The cofactor is Zn(2+). It depends on Fe(3+) as a cofactor.

The protein resides in the cytoplasm. The catalysed reaction is 4-imidazolone-5-propanoate + H2O = N-formimidoyl-L-glutamate. It functions in the pathway amino-acid degradation; L-histidine degradation into L-glutamate; N-formimidoyl-L-glutamate from L-histidine: step 3/3. In terms of biological role, catalyzes the hydrolytic cleavage of the carbon-nitrogen bond in imidazolone-5-propanoate to yield N-formimidoyl-L-glutamate. It is the third step in the universal histidine degradation pathway. This is Imidazolonepropionase from Thermoplasma volcanium (strain ATCC 51530 / DSM 4299 / JCM 9571 / NBRC 15438 / GSS1).